A 970-amino-acid polypeptide reads, in one-letter code: Protein translocase subunit SecA (970 aa).

Residues Gln-99, 117-121 (GEGKT), and Asp-631 each bind ATP.

It belongs to the SecA family. As to quaternary structure, monomer and homodimer. Part of the essential Sec protein translocation apparatus which comprises SecA, SecYEG and auxiliary proteins SecDF. Other proteins may also be involved.

It is found in the cell inner membrane. The protein localises to the cytoplasm. The catalysed reaction is ATP + H2O + cellular proteinSide 1 = ADP + phosphate + cellular proteinSide 2.. Part of the Sec protein translocase complex. Interacts with the SecYEG preprotein conducting channel. Has a central role in coupling the hydrolysis of ATP to the transfer of proteins into and across the cell membrane, serving as an ATP-driven molecular motor driving the stepwise translocation of polypeptide chains across the membrane. The chain is Protein translocase subunit SecA from Chlamydia caviae (strain ATCC VR-813 / DSM 19441 / 03DC25 / GPIC) (Chlamydophila caviae).